A 323-amino-acid polypeptide reads, in one-letter code: Aquaporin-2 (323 aa).

Helical transmembrane passes span phenylalanine 32–arginine 54, tyrosine 74–glycine 96, and cysteine 103–alanine 123. An NPA 1 motif is present at residues asparagine 85–alanine 87. Asparagine 143 carries N-linked (GlcNAc...) asparagine glycosylation. The next 2 helical transmembrane spans lie at glycine 161–valine 181 and phenylalanine 193–glycine 213. The NPA 2 signature appears at asparagine 217–serine 219. The helical transmembrane segment at tyrosine 243–isoleucine 263 threads the bilayer. Asparagine 292 carries N-linked (GlcNAc...) asparagine glycosylation.

This sequence belongs to the MIP/aquaporin (TC 1.A.8) family.

It localises to the cell membrane. The enzyme catalyses H2O(in) = H2O(out). The catalysed reaction is glycerol(in) = glycerol(out). Aquaglyceroporin that may modulate the water content and osmolytes during anhydrobiosis. The chain is Aquaporin-2 from Milnesium tardigradum (Water bear).